We begin with the raw amino-acid sequence, 229 residues long: Leucyl/phenylalanyl-tRNA--protein transferase (229 aa).

This sequence belongs to the L/F-transferase family.

Its subcellular location is the cytoplasm. It catalyses the reaction N-terminal L-lysyl-[protein] + L-leucyl-tRNA(Leu) = N-terminal L-leucyl-L-lysyl-[protein] + tRNA(Leu) + H(+). It carries out the reaction N-terminal L-arginyl-[protein] + L-leucyl-tRNA(Leu) = N-terminal L-leucyl-L-arginyl-[protein] + tRNA(Leu) + H(+). The catalysed reaction is L-phenylalanyl-tRNA(Phe) + an N-terminal L-alpha-aminoacyl-[protein] = an N-terminal L-phenylalanyl-L-alpha-aminoacyl-[protein] + tRNA(Phe). In terms of biological role, functions in the N-end rule pathway of protein degradation where it conjugates Leu, Phe and, less efficiently, Met from aminoacyl-tRNAs to the N-termini of proteins containing an N-terminal arginine or lysine. In Pseudomonas syringae pv. syringae (strain B728a), this protein is Leucyl/phenylalanyl-tRNA--protein transferase.